The sequence spans 145 residues: Phospholipase A2 (145 aa).

The first 15 residues, 1–15 (MRLLVLAALLTVGAG), serve as a signal peptide directing secretion. At Q16 the chain carries Pyrrolidone carboxylic acid. The propeptide at 16-22 (QAGLNSR) is removed by trypsin. Disulfide bonds link C33-C99, C49-C145, C51-C67, C66-C127, C73-C120, C83-C113, and C106-C118. Residues Y50, G52, and G54 each contribute to the Ca(2+) site. Residue H70 is part of the active site. D71 provides a ligand contact to Ca(2+). D121 is an active-site residue.

Belongs to the phospholipase A2 family. In terms of assembly, monomer or homodimer. Requires Ca(2+) as cofactor. Activated by trypsin cleavage in the duodenum. Can also be activated by thrombin or autocatalytically.

It is found in the secreted. The catalysed reaction is a 1,2-diacyl-sn-glycero-3-phosphocholine + H2O = a 1-acyl-sn-glycero-3-phosphocholine + a fatty acid + H(+). It carries out the reaction 1,2-ditetradecanoyl-sn-glycero-3-phosphocholine + H2O = 1-tetradecanoyl-sn-glycero-3-phosphocholine + tetradecanoate + H(+). The enzyme catalyses 1,2-dihexadecanoyl-sn-glycero-3-phosphocholine + H2O = 1-hexadecanoyl-sn-glycero-3-phosphocholine + hexadecanoate + H(+). It catalyses the reaction 1-hexadecanoyl-2-(9Z-octadecenoyl)-sn-glycero-3-phosphocholine + H2O = 1-hexadecanoyl-sn-glycero-3-phosphocholine + (9Z)-octadecenoate + H(+). The catalysed reaction is 1-hexadecanoyl-2-(5Z,8Z,11Z,14Z-eicosatetraenoyl)-sn-glycero-3-phosphocholine + H2O = 1-hexadecanoyl-sn-glycero-3-phosphocholine + (5Z,8Z,11Z,14Z)-eicosatetraenoate + H(+). It carries out the reaction 1-hexadecanoyl-2-(9Z-octadecenoyl)-sn-glycero-3-phospho-(1'-sn-glycerol) + H2O = 1-hexadecanoyl-sn-glycero-3-phospho-(1'-sn-glycerol) + (9Z)-octadecenoate + H(+). The enzyme catalyses N-hexadecanoyl-1,2-di-(9Z-octadecenoyl)-sn-glycero-3-phosphoethanolamine + H2O = N-hexadecanoyl-1-(9Z-octadecenoyl)-sn-glycero-3-phosphoethanolamine + (9Z)-octadecenoate + H(+). It catalyses the reaction 1-hexadecanoyl-2-(9Z,12Z-octadecadienoyl)-sn-glycero-3-phosphoethanolamine + H2O = 1-hexadecanoyl-sn-glycero-3-phosphoethanolamine + (9Z,12Z)-octadecadienoate + H(+). The catalysed reaction is N,1-dihexadecanoyl-2-(9Z,12Z-octadecadienoyl)-sn-glycero-3-phosphoethanolamine + H2O = N,1-dihexadecanoyl-sn-glycero-3-phosphoethanolamine + (9Z,12Z)-octadecadienoate + H(+). Its function is as follows. Secretory calcium-dependent phospholipase A2 that primarily targets dietary phospholipids in the intestinal tract. Hydrolyzes the ester bond of the fatty acyl group attached at sn-2 position of phospholipids (phospholipase A2 activity) with preference for phosphatidylethanolamines and phosphatidylglycerols over phosphatidylcholines. May play a role in the biosynthesis of N-acyl ethanolamines that regulate energy metabolism and inflammation in the intestinal tract. Hydrolyzes N-acyl phosphatidylethanolamines to N-acyl lysophosphatidylethanolamines, which are further cleaved by a lysophospholipase D to release N-acyl ethanolamines. May act in an autocrine and paracrine manner. Has anti-helminth activity in a process regulated by gut microbiota. Upon helminth infection of intestinal epithelia, directly affects phosphatidylethanolamine contents in the membrane of helminth larvae, likely controlling an array of phospholipid-mediated cellular processes such as membrane fusion and cell division while providing for better immune recognition, ultimately reducing larvae integrity and infectivity. This is Phospholipase A2 (PLA2G1B) from Bos taurus (Bovine).